Consider the following 668-residue polypeptide: MEDKFANLSLHEKTGKSSIQLNEQTGSDNGSAVKRTSSTSSHYNNINADLHARVKAFQEQRALKRSASVGSNQSEQDKGSSQSPKHIQQIVNKPLPPLPVAGSSKVSQRMSSQVVQASSKSTLKNVLDNQETQNITDVNINIDTTKITATTIGVNTGLPATDITPSVSNTASATHKAQLLNPNRRAPRRPLSTQHPTRPNVAPHKAPAIINTPKQSLSARRGLKLPPGGMSLKMPTKTAQQPQQFAPSPSNKKHIETLSNSKVVEGKRSNPGSLINGVQSTSTSSSTEGPHDTVGTTPRTGNSNNSSNSGSSGGGGLFANFSKYVDIKSGSLNFAGKLSLSSKGIDFSNGSSSRITLDELEFLDELGHGNYGNVSKVLHKPTNVIMATKEVRLELDEAKFRQILMELEVLHKCNSPYIVDFYGAFFIEGAVYMCMEYMDGGSLDKIYDESSEIGGIDEPQLAFIANAVIHGLKELKEQHNIIHRDVKPTNILCSANQGTVKLCDFGVSGNLVASLAKTNIGCQSYMAPERIKSLNPDRATYTVQSDIWSLGLSILEMALGRYPYPPETYDNIFSQLSAIVDGPPPRLPSDKFSSDAQDFVSLCLQKIPERRPTYAALTEHPWLVKYRNQDVHMSEYITERLERRNKILRERGENGLSKNVPALHMGGL.

The segment covering 1 to 15 has biased composition (basic and acidic residues); the sequence is MEDKFANLSLHEKTG. 3 disordered regions span residues 1-43, 61-120, and 181-313; these read MEDK…SSHY, RALK…ASSK, and NPNR…GSSG. Polar residues-rich tracts occupy residues 16-43, 68-91, and 104-120; these read KSSIQLNEQTGSDNGSAVKRTSSTSSHY, SVGSNQSEQDKGSSQSPKHIQQIV, and SKVSQRMSSQVVQASSK. Ser-68 is subject to Phosphoserine. Residues 239 to 250 show a composition bias toward low complexity; the sequence is AQQPQQFAPSPS. Phosphoserine is present on Ser-269. Residues 270-300 are compositionally biased toward polar residues; that stretch reads NPGSLINGVQSTSTSSSTEGPHDTVGTTPRT. Over residues 301–310 the composition is skewed to low complexity; it reads GNSNNSSNSG. The 264-residue stretch at 360-623 folds into the Protein kinase domain; the sequence is LEFLDELGHG…YAALTEHPWL (264 aa). Residues 366–374 and Lys-389 contribute to the ATP site; that span reads LGHGNYGNV. The active-site Proton acceptor is Asp-485. Ser-514 carries the phosphoserine modification. The residue at position 518 (Thr-518) is a Phosphothreonine.

The protein belongs to the protein kinase superfamily. STE Ser/Thr protein kinase family. MAP kinase kinase subfamily. In terms of assembly, interacts with NBP2, PTC1, SHO1 and STE11. In terms of processing, activated by phosphorylation by SSK2 or SSK22. Ser/Thr phosphorylation is also necessary for SHO1-mediated activation.

Its subcellular location is the cytoplasm. It catalyses the reaction L-seryl-[protein] + ATP = O-phospho-L-seryl-[protein] + ADP + H(+). It carries out the reaction L-threonyl-[protein] + ATP = O-phospho-L-threonyl-[protein] + ADP + H(+). The catalysed reaction is L-tyrosyl-[protein] + ATP = O-phospho-L-tyrosyl-[protein] + ADP + H(+). Kinase involved in a signal transduction pathway that is activated by changes in the osmolarity of the extracellular environment. Activates the MAP kinase HOG1 by concomitant phosphorylation at 'Thr-174' and 'Tyr-176'. The chain is MAP kinase kinase PBS2 (PBS2) from Saccharomyces cerevisiae (strain ATCC 204508 / S288c) (Baker's yeast).